Consider the following 348-residue polypeptide: GPALPP motifs-containing protein 1 (348 aa).

Disordered stretches follow at residues 1-163 (MARD…AKGP) and 177-317 (QRMK…DLKV). An N-acetylalanine modification is found at alanine 2. Positions 7–12 (GPALPP) match the GPALPP motif 1 motif. Basic and acidic residues predominate over residues 14 to 27 (FKERATVEDQERDP). Residue serine 28 is modified to Phosphoserine. The GPALPP motif 2 motif lies at 32–37 (GPALPP). Residues 41–59 (SSSSDSSDSNEDSSSLSEE) show a composition bias toward low complexity. Positions 60–69 (GNQESEEDDA) are enriched in acidic residues. A GPALPP motif 3 motif is present at residues 93–98 (GPALPP). Serine 106 carries the phosphoserine modification. Over residues 108–117 (PRPIIGPALP) the composition is skewed to pro residues. A GPALPP motif 4 motif is present at residues 113-118 (GPALPP). 3 positions are modified to phosphoserine: serine 138, serine 143, and serine 148. A compositionally biased stretch (acidic residues) spans 144–154 (EEAESGEDEDI). Composition is skewed to basic and acidic residues over residues 177-195 (QRMK…KPVT), 235-269 (PADR…KRLA), 277-287 (ESKRSESLMDI), and 295-317 (KAAE…DLKV). Residues lysine 279 and lysine 316 each participate in a glycyl lysine isopeptide (Lys-Gly) (interchain with G-Cter in SUMO2) cross-link.

The protein is GPALPP motifs-containing protein 1 (Gpalpp1) of Rattus norvegicus (Rat).